A 666-amino-acid chain; its full sequence is Spartin (666 aa).

M1 is modified (N-acetylmethionine). Residues 16-94 (IREAYKKAFL…LQNVRTRLEI (79 aa)) enclose the MIT domain. Residues 124 to 156 (EKLPEPQSFSSAPQHAEVNGNTSTPSAGAVAAP) are disordered. Residues 146-156 (STPSAGAVAAP) show a composition bias toward low complexity. Residues 190 to 380 (DSGEFSSVGE…QLDQGNKDVR (191 aa)) form a ubiquitin-binding region (UBR) domain region. The short motif at 193 to 200 (EFSSVGEE) is the LC3-interacting region (LIR); mediates interaction with MAP1LC3A AND MAP1LC3C element. The disordered stretch occupies residues 344–398 (EENEFQIPGRTRPSSDQLKEASGTDVKQLDQGNKDVRHKGKRGKRAKDTSSEEVN). A Glycyl lysine isopeptide (Lys-Gly) (interchain with G-Cter in ubiquitin) cross-link involves residue K362. Residues 379 to 388 (VRHKGKRGKR) are compositionally biased toward basic residues. In terms of domain architecture, Senescence spans 427–611 (ILSGASWVSW…YNINNIGIKA (185 aa)). Residues 431 to 503 (ASWVSWGLVK…LVDGVCTVAN (73 aa)) form a required for localization to lipid droplets region. S470 bears the Phosphoserine mark. Positions 636–666 (RENQEGAANVNVRGEKDEQTKEVKEAKKKDK) are disordered. A compositionally biased stretch (basic and acidic residues) spans 648-666 (RGEKDEQTKEVKEAKKKDK).

As to quaternary structure, interacts with ITCH and WWP1. Interacts (via MIT domain) with IST1; leading to the recruitment of SPART to midbodies. Interacts with MAP1LC3A and MAP1LC3C. In terms of processing, ubiquitinated; ubiquitination does not require ITCH and WWP1. Ubiquitously expressed, with highest levels of expression detected in adipose tissue.

Its subcellular location is the cytoplasm. The protein localises to the midbody. The protein resides in the lipid droplet. Its function is as follows. Lipophagy receptor that plays an important role in lipid droplet (LD) turnover in motor neurons. Localizes to LDs and interacts with components of the autophagy machinery, such as MAP1LC3A/C proteins to deliver LDs to autophagosomes for degradation via lipophagy. Lipid transfer protein required for lipid droplet degradation, including by lipophagy. Can bind and transfer all lipid species found in lipid droplets, from phospholipids to triglycerides and sterol esters but the direction of lipid transfer by spartin and its cargos are unknown. May be implicated in endosomal trafficking, or microtubule dynamics, or both. Participates in cytokinesis. The chain is Spartin from Homo sapiens (Human).